A 385-amino-acid polypeptide reads, in one-letter code: Putative mitochondrial carrier protein TRV_02148.2 (385 aa).

Solcar repeat units lie at residues 24 to 124 (SNTL…LHAR) and 130 to 210 (RTAG…LRRR). 5 helical membrane passes run 30 to 47 (GTAIALSTALLHPLDSIL), 132 to 150 (AGNELLLSLVSMAFVKLFT), 184 to 207 (WSAYGATLVLCVRSCVLPVVYLAL), 263 to 279 (YTICVLMVCLGLLLEVI), and 294 to 310 (VVTVAMMRLSAVMLYML).

Belongs to the mitochondrial carrier (TC 2.A.29) family.

It localises to the mitochondrion inner membrane. In terms of biological role, may function as a mitochondrial transporter. The polypeptide is Putative mitochondrial carrier protein TRV_02148.2 (Trichophyton verrucosum (strain HKI 0517)).